Here is a 196-residue protein sequence, read N- to C-terminus: Anthranilate synthase component 2 (196 aa).

A Glutamine amidotransferase type-1 domain is found at 3 to 196 (NIVFIDNFDS…IEWALEKNNA (194 aa)). Position 57–59 (57–59 (GPG)) interacts with L-glutamine. Catalysis depends on Cys-84, which acts as the Nucleophile; for GATase activity. Residues Gln-88 and 134 to 135 (SL) contribute to the L-glutamine site. Active-site for GATase activity residues include His-170 and Glu-172.

Heterotetramer consisting of two non-identical subunits: a beta subunit (TrpG) and a large alpha subunit (TrpE).

It carries out the reaction chorismate + L-glutamine = anthranilate + pyruvate + L-glutamate + H(+). Its pathway is amino-acid biosynthesis; L-tryptophan biosynthesis; L-tryptophan from chorismate: step 1/5. In terms of biological role, part of a heterotetrameric complex that catalyzes the two-step biosynthesis of anthranilate, an intermediate in the biosynthesis of L-tryptophan. In the first step, the glutamine-binding beta subunit (TrpG) of anthranilate synthase (AS) provides the glutamine amidotransferase activity which generates ammonia as a substrate that, along with chorismate, is used in the second step, catalyzed by the large alpha subunit of AS (TrpE) to produce anthranilate. In the absence of TrpG, TrpE can synthesize anthranilate directly from chorismate and high concentrations of ammonia. This Vibrio parahaemolyticus serotype O3:K6 (strain RIMD 2210633) protein is Anthranilate synthase component 2 (trpG).